Reading from the N-terminus, the 101-residue chain is 2-amino-4-ketopentanoate thiolase alpha subunit (101 aa).

This sequence belongs to the OrtA family. As to quaternary structure, heterodimer with OrtB.

The enzyme catalyses D-alanine + acetyl-CoA = (2R)-2-amino-4-oxopentanoate + CoA. Functionally, involved in the ornithine fermentation pathway. Catalyzes the thiolytic cleavage of 2-amino-4-ketopentanoate (AKP) with coenzyme A (CoA) to form acetyl-CoA and alanine. It is strictly specific for AKP. The polypeptide is 2-amino-4-ketopentanoate thiolase alpha subunit (Unknown prokaryotic organism).